The primary structure comprises 448 residues: Phosphoglucosamine mutase (448 aa).

The active-site Phosphoserine intermediate is Ser-100. The Mg(2+) site is built by Ser-100, Asp-240, Asp-242, and Asp-244. A Phosphoserine modification is found at Ser-100.

Belongs to the phosphohexose mutase family. It depends on Mg(2+) as a cofactor. Post-translationally, activated by phosphorylation.

The enzyme catalyses alpha-D-glucosamine 1-phosphate = D-glucosamine 6-phosphate. In terms of biological role, catalyzes the conversion of glucosamine-6-phosphate to glucosamine-1-phosphate. The chain is Phosphoglucosamine mutase from Clostridium acetobutylicum (strain ATCC 824 / DSM 792 / JCM 1419 / IAM 19013 / LMG 5710 / NBRC 13948 / NRRL B-527 / VKM B-1787 / 2291 / W).